The chain runs to 81 residues: Photosystem I iron-sulfur center (81 aa).

4Fe-4S ferredoxin-type domains lie at 2-31 and 39-68; these read SHTVKIYDTCIGCTQCVRACPTDVLEMIPW and IASSPRTEDCVGCKRCESACPTDFLSVRVY. [4Fe-4S] cluster-binding residues include C11, C14, C17, C21, C48, C51, C54, and C58.

The eukaryotic PSI reaction center is composed of at least 11 subunits. [4Fe-4S] cluster is required as a cofactor.

The protein localises to the plastid. Its subcellular location is the chloroplast thylakoid membrane. The enzyme catalyses reduced [plastocyanin] + hnu + oxidized [2Fe-2S]-[ferredoxin] = oxidized [plastocyanin] + reduced [2Fe-2S]-[ferredoxin]. In terms of biological role, apoprotein for the two 4Fe-4S centers FA and FB of photosystem I (PSI); essential for photochemical activity. FB is the terminal electron acceptor of PSI, donating electrons to ferredoxin. The C-terminus interacts with PsaA/B/D and helps assemble the protein into the PSI complex. Required for binding of PsaD and PsaE to PSI. PSI is a plastocyanin-ferredoxin oxidoreductase, converting photonic excitation into a charge separation, which transfers an electron from the donor P700 chlorophyll pair to the spectroscopically characterized acceptors A0, A1, FX, FA and FB in turn. This is Photosystem I iron-sulfur center from Chaetosphaeridium globosum (Charophycean green alga).